A 100-amino-acid chain; its full sequence is Large ribosomal subunit protein bL21 (100 aa).

Belongs to the bacterial ribosomal protein bL21 family. As to quaternary structure, part of the 50S ribosomal subunit. Contacts protein L20.

Its function is as follows. This protein binds to 23S rRNA in the presence of protein L20. This chain is Large ribosomal subunit protein bL21, found in Mycoplasma pneumoniae (strain ATCC 29342 / M129 / Subtype 1) (Mycoplasmoides pneumoniae).